Here is a 297-residue protein sequence, read N- to C-terminus: MATH domain and coiled-coil domain-containing protein At2g05420 (297 aa).

Positions 7-139 (SKTITWVIEN…NGELTLVAKV (133 aa)) constitute an MATH domain. Residues 239-281 (KLDWLEKKHGEIKEKKKKEEASLKRLQEMEKQIFNEAQIYKEK) are a coiled coil.

This Arabidopsis thaliana (Mouse-ear cress) protein is MATH domain and coiled-coil domain-containing protein At2g05420.